The primary structure comprises 337 residues: Ornithine carbamoyltransferase (337 aa).

Carbamoyl phosphate is bound by residues 56-59, Q83, R107, and 134-137; these read STRT and HPTQ. Residues N168, D232, and 236 to 237 contribute to the L-ornithine site; that span reads SM. Residues 274–275 and R320 contribute to the carbamoyl phosphate site; that span reads CL.

The protein belongs to the aspartate/ornithine carbamoyltransferase superfamily. OTCase family.

The protein localises to the cytoplasm. The enzyme catalyses carbamoyl phosphate + L-ornithine = L-citrulline + phosphate + H(+). The protein operates within amino-acid biosynthesis; L-arginine biosynthesis; L-arginine from L-ornithine and carbamoyl phosphate: step 1/3. Its function is as follows. Reversibly catalyzes the transfer of the carbamoyl group from carbamoyl phosphate (CP) to the N(epsilon) atom of ornithine (ORN) to produce L-citrulline. The protein is Ornithine carbamoyltransferase of Shigella flexneri serotype 5b (strain 8401).